A 155-amino-acid chain; its full sequence is Large ribosomal subunit protein uL22 (155 aa).

This sequence belongs to the universal ribosomal protein uL22 family. In terms of assembly, part of the 50S ribosomal subunit.

Functionally, this protein binds specifically to 23S rRNA. It makes multiple contacts with different domains of the 23S rRNA in the assembled 50S subunit and ribosome. In terms of biological role, the globular domain of the protein is located near the polypeptide exit tunnel on the outside of the subunit, while an extended beta-hairpin is found that lines the wall of the exit tunnel in the center of the 70S ribosome. This Archaeoglobus fulgidus (strain ATCC 49558 / DSM 4304 / JCM 9628 / NBRC 100126 / VC-16) protein is Large ribosomal subunit protein uL22.